The following is a 371-amino-acid chain: Cytochrome b (371 aa).

The next 4 helical transmembrane spans lie at 25-45 (FGSL…FLAI), 69-90 (WIMQ…YTHI), 105-125 (WLSG…GYVL), and 170-190 (FFAL…IHII). Residues histidine 75 and histidine 89 each coordinate heme b. Heme b contacts are provided by histidine 174 and histidine 188. Histidine 193 serves as a coordination point for a ubiquinone. 4 helical membrane-spanning segments follow: residues 218–238 (YKDM…MTFA), 280–300 (LGGT…PFTH), 312–332 (LTQI…WTAT), and 339–358 (FIYI…IMNP).

The protein belongs to the cytochrome b family. In terms of assembly, the cytochrome bc1 complex contains 3 respiratory subunits (MT-CYB, CYC1 and UQCRFS1), 2 core proteins (UQCRC1 and UQCRC2) and probably 6 low-molecular weight proteins. The cofactor is heme b.

Its subcellular location is the mitochondrion inner membrane. In terms of biological role, component of the ubiquinol-cytochrome c reductase complex (complex III or cytochrome b-c1 complex) that is part of the mitochondrial respiratory chain. The b-c1 complex mediates electron transfer from ubiquinol to cytochrome c. Contributes to the generation of a proton gradient across the mitochondrial membrane that is then used for ATP synthesis. This chain is Cytochrome b (MT-CYB), found in Micruroides euryxanthus (Sonoran coral snake).